We begin with the raw amino-acid sequence, 153 residues long: Coiled-coil domain-containing protein 182 (153 aa).

A coiled-coil region spans residues 46–109; sequence ADLEILQQKV…RLREEEDRGI (64 aa).

This chain is Coiled-coil domain-containing protein 182 (CCDC182), found in Homo sapiens (Human).